The primary structure comprises 80 residues: Spermatid-specific protein S2 (80 aa).

Over residues 1 to 36 the composition is skewed to basic residues; sequence VKSRYHQRQYRARKRYAKARRTKKPKRRPKPPRKLR. The interval 1–44 is disordered; that stretch reads VKSRYHQRQYRARKRYAKARRTKKPKRRPKPPRKLRYAPSKKQP.

It is found in the nucleus. The protein localises to the chromosome. Involved in nuclear basic protein transition: histones are replaced by spermatid specific proteins which are themselves replaced by protamines in late spermatids. The sequence is that of Spermatid-specific protein S2 from Scyliorhinus canicula (Small-spotted catshark).